An 828-amino-acid chain; its full sequence is DNA gyrase subunit A (828 aa).

A Topo IIA-type catalytic domain is found at 38 to 501 (LPDARDGLKP…SYESIDTEDL (464 aa)). The active-site O-(5'-phospho-DNA)-tyrosine intermediate is Y126. Residues 528–534 (QNRGGKG) carry the GyrA-box motif.

Belongs to the type II topoisomerase GyrA/ParC subunit family. In terms of assembly, heterotetramer, composed of two GyrA and two GyrB chains. In the heterotetramer, GyrA contains the active site tyrosine that forms a transient covalent intermediate with DNA, while GyrB binds cofactors and catalyzes ATP hydrolysis.

Its subcellular location is the cytoplasm. The catalysed reaction is ATP-dependent breakage, passage and rejoining of double-stranded DNA.. Its function is as follows. A type II topoisomerase that negatively supercoils closed circular double-stranded (ds) DNA in an ATP-dependent manner to modulate DNA topology and maintain chromosomes in an underwound state. Negative supercoiling favors strand separation, and DNA replication, transcription, recombination and repair, all of which involve strand separation. Also able to catalyze the interconversion of other topological isomers of dsDNA rings, including catenanes and knotted rings. Type II topoisomerases break and join 2 DNA strands simultaneously in an ATP-dependent manner. The sequence is that of DNA gyrase subunit A from Helicobacter pylori (strain J99 / ATCC 700824) (Campylobacter pylori J99).